We begin with the raw amino-acid sequence, 384 residues long: 2-deoxy-scyllo-inosose synthase (384 aa).

NAD(+)-binding positions include aspartate 42, 73-76 (EVHK), 105-109 (GITGN), 129-130 (TT), 140-142 (SLK), and 151-152 (KN). Lysine 142 is a catalytic residue. Glutamate 184 lines the Co(2+) pocket. Residue glutamate 244 is part of the active site. Co(2+) contacts are provided by histidine 247 and histidine 263.

Belongs to the sugar phosphate cyclases superfamily. DOI synthase family. The cofactor is NAD(+). Requires Co(2+) as cofactor.

It catalyses the reaction D-glucose 6-phosphate = 2-deoxy-L-scyllo-inosose + phosphate. Its pathway is metabolic intermediate biosynthesis; 2-deoxystreptamine biosynthesis; 2-deoxystreptamine from D-glucose 6-phosphate: step 1/4. The protein operates within antibiotic biosynthesis; lividomycin biosynthesis. Catalyzes the intramolecular carbocycle formation from D-glucose-6-phosphate to 2-deoxy-scyllo-inosose (DOI). The chain is 2-deoxy-scyllo-inosose synthase (livC) from Streptomyces lividus.